Reading from the N-terminus, the 713-residue chain is MNSLFATTAQGLEELLRSELETLGAASCKVALGGVHFQADSRLLYRALLWSRLASRIVLPLNVFSVGSDGDLYRGVQAVDWPSLFTVDKRFAVYFSGTNAAIRNSQYGALKVKDAIVDSFTRHGARRPDVDRQQPDIRIQAYLHRDQVMLSLDLSGSSLHQRGYRGAAGQAPLKENLAVAIVLRSGWKPGTPLLDPMCGSGTLLIEAAMIAADCAPGLTRPYWGFSAWSGHDEAQWQESLDEARARTQTGLAQTSSRFYGFDIDGRVLEKARHNARRAGVAALITFQTGEVAQLINPLPEGQRGTVVSNPPYGERLESEPALIALHNQLGRVMKSQFGGWRLSLFSASPALLGALMLRAERSFSAKNGPLDCEQKNYLLAETATAPGSVEGQIATDFANRLRKNVRSLQKWVEREKLDCYRLYDADLPEYNVAIDRYSSWVVIQEYVAPKSVDPERARQRLYDVINATLAVLAIPASRLVVKARERQKGKSQYEKLAQKGEFLLVEEYGAKLWVNLTDYLDTGLFIDHRIARRMLGEMSRGKDFLNLFAYTGSASVHAGIGGACSTTSVDMSRTYLEWAEKNLRSNGLVGRQHRLIQADCLAWLAMAQETFDVIFIDPPTFSNSKRMADTFDVQRDHLALMAQLKRLLRPGGTLMFSNNKRGFQLDEAGLAALGLRAQSITDRTRSPDFAHNRQIHLCWLISHADKDTFKSCH.

Residues 43–154 enclose the THUMP domain; it reads LLYRALLWSR…RDQVMLSLDL (112 aa).

Belongs to the methyltransferase superfamily. RlmKL family.

The protein localises to the cytoplasm. It catalyses the reaction guanosine(2445) in 23S rRNA + S-adenosyl-L-methionine = N(2)-methylguanosine(2445) in 23S rRNA + S-adenosyl-L-homocysteine + H(+). The catalysed reaction is guanosine(2069) in 23S rRNA + S-adenosyl-L-methionine = N(2)-methylguanosine(2069) in 23S rRNA + S-adenosyl-L-homocysteine + H(+). Functionally, specifically methylates the guanine in position 2445 (m2G2445) and the guanine in position 2069 (m7G2069) of 23S rRNA. This is Ribosomal RNA large subunit methyltransferase K/L from Sodalis glossinidius (strain morsitans).